The primary structure comprises 194 residues: Insertion element IS136 uncharacterized 21.2 kDa protein (194 aa).

A disordered region spans residues 73-103; the sequence is SCDRACAPTPGRDPPVSSLPNSRQPARQNPR. A compositionally biased stretch (polar residues) spans 90–103; it reads SLPNSRQPARQNPR.

The sequence is that of Insertion element IS136 uncharacterized 21.2 kDa protein from Agrobacterium tumefaciens (strain T37).